The primary structure comprises 234 residues: Uridylate kinase (234 aa).

9–12 contributes to the ATP binding site; the sequence is KLSG. Glycine 51 provides a ligand contact to UMP. Glycine 52 and arginine 56 together coordinate ATP. Residues aspartate 71 and 132–139 each bind UMP; that span reads CGNPFFTT. 3 residues coordinate ATP: threonine 159, tyrosine 165, and aspartate 168.

It belongs to the UMP kinase family. In terms of assembly, homohexamer.

It is found in the cytoplasm. The catalysed reaction is UMP + ATP = UDP + ADP. The protein operates within pyrimidine metabolism; CTP biosynthesis via de novo pathway; UDP from UMP (UMPK route): step 1/1. Its activity is regulated as follows. Inhibited by UTP. Catalyzes the reversible phosphorylation of UMP to UDP. The chain is Uridylate kinase from Prochlorococcus marinus (strain MIT 9515).